A 58-amino-acid polypeptide reads, in one-letter code: Attractin (58 aa).

3 disulfide bridges follow: Cys4–Cys41, Cys13–Cys33, and Cys20–Cys26. An N-linked (GlcNAc...) asparagine glycan is attached at Asn8.

As to expression, produced by the albumen gland of the egg cordons.

The protein localises to the secreted. Water-borne pheromone that attract the marine mollusk Aplysia into breeding aggregations and coordinate male and female reproductive behavior within the aggregation. This is Attractin (ATT) from Aplysia fasciata (Mottled sea hare).